An 83-amino-acid chain; its full sequence is RNA-binding protein Hfq (83 aa).

The 61-residue stretch at 11–71 (DVFLNYIRKN…ISTIMPASPV (61 aa)) folds into the Sm domain.

Belongs to the Hfq family. As to quaternary structure, homohexamer.

RNA chaperone that binds small regulatory RNA (sRNAs) and mRNAs to facilitate mRNA translational regulation in response to envelope stress, environmental stress and changes in metabolite concentrations. Also binds with high specificity to tRNAs. This is RNA-binding protein Hfq from Rhodospirillum rubrum (strain ATCC 11170 / ATH 1.1.1 / DSM 467 / LMG 4362 / NCIMB 8255 / S1).